The primary structure comprises 355 residues: Probable butyrate kinase (355 aa).

It belongs to the acetokinase family.

It localises to the cytoplasm. It catalyses the reaction butanoate + ATP = butanoyl phosphate + ADP. The protein is Probable butyrate kinase of Listeria innocua serovar 6a (strain ATCC BAA-680 / CLIP 11262).